The primary structure comprises 307 residues: tRNA dimethylallyltransferase (307 aa).

9–16 (GPTAIGKT) serves as a coordination point for ATP. 11–16 (TAIGKT) provides a ligand contact to substrate. 2 interaction with substrate tRNA regions span residues 34–37 (DSRQ) and 164–168 (QRMMR).

This sequence belongs to the IPP transferase family. In terms of assembly, monomer. The cofactor is Mg(2+).

The enzyme catalyses adenosine(37) in tRNA + dimethylallyl diphosphate = N(6)-dimethylallyladenosine(37) in tRNA + diphosphate. Catalyzes the transfer of a dimethylallyl group onto the adenine at position 37 in tRNAs that read codons beginning with uridine, leading to the formation of N6-(dimethylallyl)adenosine (i(6)A). This chain is tRNA dimethylallyltransferase, found in Flavobacterium psychrophilum (strain ATCC 49511 / DSM 21280 / CIP 103535 / JIP02/86).